We begin with the raw amino-acid sequence, 382 residues long: Carbamoyl phosphate synthase small chain (382 aa).

Residues 1–187 are CPSase; it reads MPTPALLVLA…EFRPQTATEE (187 aa). L-glutamine is bound by residues serine 47, glycine 239, and glycine 241. The Glutamine amidotransferase type-1 domain occupies 191 to 377; that stretch reads TVVAIDFGVK…VAQMRAYRQQ (187 aa). Cysteine 267 functions as the Nucleophile in the catalytic mechanism. L-glutamine-binding residues include leucine 268, glutamine 271, asparagine 307, glycine 309, and phenylalanine 310. Residues histidine 350 and glutamate 352 contribute to the active site.

Belongs to the CarA family. As to quaternary structure, composed of two chains; the small (or glutamine) chain promotes the hydrolysis of glutamine to ammonia, which is used by the large (or ammonia) chain to synthesize carbamoyl phosphate. Tetramer of heterodimers (alpha,beta)4.

The catalysed reaction is hydrogencarbonate + L-glutamine + 2 ATP + H2O = carbamoyl phosphate + L-glutamate + 2 ADP + phosphate + 2 H(+). It carries out the reaction L-glutamine + H2O = L-glutamate + NH4(+). The protein operates within amino-acid biosynthesis; L-arginine biosynthesis; carbamoyl phosphate from bicarbonate: step 1/1. It functions in the pathway pyrimidine metabolism; UMP biosynthesis via de novo pathway; (S)-dihydroorotate from bicarbonate: step 1/3. Its function is as follows. Small subunit of the glutamine-dependent carbamoyl phosphate synthetase (CPSase). CPSase catalyzes the formation of carbamoyl phosphate from the ammonia moiety of glutamine, carbonate, and phosphate donated by ATP, constituting the first step of 2 biosynthetic pathways, one leading to arginine and/or urea and the other to pyrimidine nucleotides. The small subunit (glutamine amidotransferase) binds and cleaves glutamine to supply the large subunit with the substrate ammonia. The protein is Carbamoyl phosphate synthase small chain of Thermosynechococcus vestitus (strain NIES-2133 / IAM M-273 / BP-1).